The primary structure comprises 572 residues: Protein IQ-DOMAIN 30 (572 aa).

Residues 75-96 (SDDEIQVSEVQPTDSQDVASVP) are disordered. The segment covering 82–92 (SEVQPTDSQDV) has biased composition (polar residues). 2 IQ domains span residues 108–136 (QEIAAVTVQAAYRGYLARRAFKILKGIIR) and 137–154 (LQALIRGHMVRRQAVSTL). The segment at 159-178 (GIVRLQALARGREIRHSDIG) is calmodulin-binding. Disordered regions lie at residues 282–332 (RPKK…MDNP) and 399–572 (IQTH…EWKR). Polar residues-rich tracts occupy residues 291–305 (PSSNLDNSSVAQTSS) and 400–419 (QTHTPLGTNESLDSTLVNQI). Residues 428–455 (AEEKEDVKEERTPKQNHKENSAGKENQK) are compositionally biased toward basic and acidic residues. Polar residues-rich tracts occupy residues 459 to 493 (KASSVTATQTAEFQESGNGNQTSSPGIPSYMQATK), 502 to 514 (QGSSSPRQLGTTE), and 522 to 560 (LPSSGNSAKITSHSPKTRVSNSSGKSGNKTEKTLLSSRE).

The protein belongs to the IQD family. As to quaternary structure, binds to multiple calmodulin (CaM) in the presence of Ca(2+) and CaM-like proteins.

It localises to the nucleus envelope. The protein resides in the cytoplasm. The protein localises to the cytoskeleton. May be involved in cooperative interactions with calmodulins or calmodulin-like proteins. Recruits calmodulin proteins to microtubules, thus being a potential scaffold in cellular signaling and trafficking. May associate with nucleic acids and regulate gene expression at the transcriptional or post-transcriptional level. In Arabidopsis thaliana (Mouse-ear cress), this protein is Protein IQ-DOMAIN 30.